The following is a 137-amino-acid chain: Acetyltransferase Atu2258 (137 aa).

The 137-residue stretch at 1–137 (MNFVLSDVAD…QSITWLEKRF (137 aa)) folds into the N-acetyltransferase domain. CoA is bound by residues 66–68 (LFV), G74, and 108–110 (RTY).

Its function is as follows. Catalyzes the transfer of an acetyl group from acetyl coenzyme A (AcCoA) to an acceptor substrate and releases both CoA and the acetylated product. It prefers glucosamine 6-phosphate or dopamine. It can also use the thialysine, N(8)-acetylspermidine, chloramphenicol, puromycin, polymyxin B, and 4-aminobutyrate ethyl ester. The polypeptide is Acetyltransferase Atu2258 (Agrobacterium fabrum (strain C58 / ATCC 33970) (Agrobacterium tumefaciens (strain C58))).